A 141-amino-acid polypeptide reads, in one-letter code: Flagellar assembly factor FliW (141 aa).

This sequence belongs to the FliW family. As to quaternary structure, interacts with translational regulator CsrA and flagellin(s).

The protein resides in the cytoplasm. In terms of biological role, acts as an anti-CsrA protein, binds CsrA and prevents it from repressing translation of its target genes, one of which is flagellin. Binds to flagellin and participates in the assembly of the flagellum. The sequence is that of Flagellar assembly factor FliW from Clostridium acetobutylicum (strain ATCC 824 / DSM 792 / JCM 1419 / IAM 19013 / LMG 5710 / NBRC 13948 / NRRL B-527 / VKM B-1787 / 2291 / W).